The chain runs to 114 residues: Large ribosomal subunit protein uL22 (114 aa).

This sequence belongs to the universal ribosomal protein uL22 family. As to quaternary structure, part of the 50S ribosomal subunit.

Its function is as follows. This protein binds specifically to 23S rRNA; its binding is stimulated by other ribosomal proteins, e.g. L4, L17, and L20. It is important during the early stages of 50S assembly. It makes multiple contacts with different domains of the 23S rRNA in the assembled 50S subunit and ribosome. The globular domain of the protein is located near the polypeptide exit tunnel on the outside of the subunit, while an extended beta-hairpin is found that lines the wall of the exit tunnel in the center of the 70S ribosome. The chain is Large ribosomal subunit protein uL22 from Streptococcus thermophilus (strain CNRZ 1066).